Consider the following 104-residue polypeptide: Phosphoribosyl-ATP pyrophosphatase (104 aa).

The protein belongs to the PRA-PH family.

Its subcellular location is the cytoplasm. It catalyses the reaction 1-(5-phospho-beta-D-ribosyl)-ATP + H2O = 1-(5-phospho-beta-D-ribosyl)-5'-AMP + diphosphate + H(+). It functions in the pathway amino-acid biosynthesis; L-histidine biosynthesis; L-histidine from 5-phospho-alpha-D-ribose 1-diphosphate: step 2/9. This is Phosphoribosyl-ATP pyrophosphatase from Erythrobacter litoralis (strain HTCC2594).